Reading from the N-terminus, the 251-residue chain is Hydroxyacylglutathione hydrolase (251 aa).

Positions 53, 55, 57, 58, 110, 127, and 165 each coordinate Zn(2+).

It belongs to the metallo-beta-lactamase superfamily. Glyoxalase II family. In terms of assembly, monomer. It depends on Zn(2+) as a cofactor.

The enzyme catalyses an S-(2-hydroxyacyl)glutathione + H2O = a 2-hydroxy carboxylate + glutathione + H(+). The protein operates within secondary metabolite metabolism; methylglyoxal degradation; (R)-lactate from methylglyoxal: step 2/2. Thiolesterase that catalyzes the hydrolysis of S-D-lactoyl-glutathione to form glutathione and D-lactic acid. This chain is Hydroxyacylglutathione hydrolase, found in Yersinia pestis (strain Pestoides F).